We begin with the raw amino-acid sequence, 422 residues long: Serine hydroxymethyltransferase (422 aa).

(6S)-5,6,7,8-tetrahydrofolate contacts are provided by residues Leu113 and 117-119 (GHL). Lys222 carries the post-translational modification N6-(pyridoxal phosphate)lysine.

It belongs to the SHMT family. In terms of assembly, homodimer. Requires pyridoxal 5'-phosphate as cofactor.

It localises to the cytoplasm. The catalysed reaction is (6R)-5,10-methylene-5,6,7,8-tetrahydrofolate + glycine + H2O = (6S)-5,6,7,8-tetrahydrofolate + L-serine. It participates in one-carbon metabolism; tetrahydrofolate interconversion. It functions in the pathway amino-acid biosynthesis; glycine biosynthesis; glycine from L-serine: step 1/1. Functionally, catalyzes the reversible interconversion of serine and glycine with tetrahydrofolate (THF) serving as the one-carbon carrier. This reaction serves as the major source of one-carbon groups required for the biosynthesis of purines, thymidylate, methionine, and other important biomolecules. Also exhibits THF-independent aldolase activity toward beta-hydroxyamino acids, producing glycine and aldehydes, via a retro-aldol mechanism. In Amoebophilus asiaticus (strain 5a2), this protein is Serine hydroxymethyltransferase.